The primary structure comprises 86 residues: U13-theraphotoxin-Cg1b (86 aa).

The N-terminal stretch at 1–21 is a signal peptide; it reads MKVSVLITLAVLGVMFVWASA. Residues 22–51 constitute a propeptide that is removed on maturation; that stretch reads AELEQSGSDQKDSPAWLKSMERIFQSEERE. Cystine bridges form between Cys-52-Cys-66, Cys-59-Cys-71, and Cys-65-Cys-78.

The protein belongs to the neurotoxin 10 (Hwtx-1) family. 41 (Jztx-36) subfamily. As to expression, expressed by the venom gland.

It is found in the secreted. Probable ion channel inhibitor. The chain is U13-theraphotoxin-Cg1b from Chilobrachys guangxiensis (Chinese earth tiger tarantula).